A 153-amino-acid polypeptide reads, in one-letter code: Putative riboflavin kinase (153 aa).

Threonine 28 and asparagine 30 together coordinate Mg(2+). Glutamate 80 acts as the Nucleophile in catalysis.

As to quaternary structure, monomer. It depends on Zn(2+) as a cofactor. The cofactor is Mg(2+).

The protein localises to the cytoplasm. It carries out the reaction riboflavin + ATP = FMN + ADP + H(+). The protein operates within cofactor biosynthesis; FMN biosynthesis; FMN from riboflavin (ATP route): step 1/1. Catalyzes the phosphorylation of riboflavin (vitamin B2) to form flavin-mononucleotide (FMN). The sequence is that of Putative riboflavin kinase from Drosophila melanogaster (Fruit fly).